A 287-amino-acid chain; its full sequence is Pantothenate synthetase (287 aa).

Position 30–37 (30–37 (MGALHSGH)) interacts with ATP. His-37 functions as the Proton donor in the catalytic mechanism. Gln-61 serves as a coordination point for (R)-pantoate. Position 61 (Gln-61) interacts with beta-alanine. 152–155 (GQKD) is an ATP binding site. (R)-pantoate is bound at residue Gln-158. ATP-binding positions include Ile-181 and 189-192 (ESSR).

It belongs to the pantothenate synthetase family. As to quaternary structure, homodimer.

The protein resides in the cytoplasm. The enzyme catalyses (R)-pantoate + beta-alanine + ATP = (R)-pantothenate + AMP + diphosphate + H(+). It participates in cofactor biosynthesis; (R)-pantothenate biosynthesis; (R)-pantothenate from (R)-pantoate and beta-alanine: step 1/1. Catalyzes the condensation of pantoate with beta-alanine in an ATP-dependent reaction via a pantoyl-adenylate intermediate. This chain is Pantothenate synthetase, found in Corynebacterium efficiens (strain DSM 44549 / YS-314 / AJ 12310 / JCM 11189 / NBRC 100395).